The chain runs to 847 residues: MASNILQIPFRRSHTVSLSTALTQYISTKYDQRPDMFADDLLIIDRLRNEAINVQEPHVSGISRLVTYAAQLKWLGGKFPVDVGVEFPWYPAFGFNTSRPVSQDNIRFELANVIFNLAALYSQLAFAVNRTTTDGLKQACNYFCQAAGILAHLRTDIVPDMRSAPPEDMDEMTLRSLEELLLAQAQECFWQKAVMDGLKDASIARLAGQVSDFYGDACDHAVKSNAISPEWIHHMTAKQHHFAAAAQYRQSLDCLEKRKYGEEVARLRDAVACVNEALKESRWINRTVLGDLQGLKNRVTEDLKRAEKDNDMIYLNPVPPKSELKLIDRACMVAAKAPSQVTDAISMLGEKGPLGQPLFSKLVPYAVHIAASIYSDRRDRLVNERIIGELENMTDKLRDLLSSLNLPGSLQALEKPLGLPPSLVAHAEEMRQQDGLNRLRKSLLDIAKVKSNDRAVYTEGVELLAAEKAEDDASRRKFGTDRWTREASEAAAPKLYTTAREIDGYFTSAQSSDNLVEQKLHDSEAVFRVLTGTNRDLEAFVPSSRRATIPPEVEREVSRLRSCISEVNRLESRRKRKAQAVKDKARADDISSALVREAARLEREFPMQAIQASQFEDLFESRLRDYDVDLDMVAQEMHDQDQIVAQVRDANRAFTRAHTGDASTKEREKALQELENGYLKYKEIISNIEVGRKFYNDLAKIVGRFRDDVKAFVHKRRMEASQLEQDISSVAAMASLNISPIRQPPQQTVVSAPVSVSAAASVPAPTHFNPVKPQPQPPSQAIPPQSQPQPQPQPLRTPLTAPQPTRSVPQVTPGMWSPEMGIRFGPGGTTAQQSQQTWDPSKGMKFS.

The region spanning 4-397 is the BRO1 domain; that stretch reads NILQIPFRRS…GELENMTDKL (394 aa). Residues 256-312 adopt a coiled-coil conformation; sequence EKRKYGEEVARLRDAVACVNEALKESRWINRTVLGDLQGLKNRVTEDLKRAEKDNDM. Residues 763–847 form a disordered region; that stretch reads PAPTHFNPVK…WDPSKGMKFS (85 aa). Positions 772-795 are enriched in pro residues; that stretch reads KPQPQPPSQAIPPQSQPQPQPQPL. Residues 796–806 show a composition bias toward low complexity; the sequence is RTPLTAPQPTR. Positions 829-839 are enriched in polar residues; that stretch reads TTAQQSQQTWD.

The protein belongs to the palA/RIM20 family. In terms of assembly, interacts with pacC by binding to its two YPX[LI] motifs.

Functionally, required for the proteolytic cleavage of the transcription factor pacC in response to alkaline ambient pH. May act as a scaffold protein that recruits the calpain-like protease palB via vps32 to its substrate pacC. The chain is pH-response regulator protein palA/RIM20 (palA) from Emericella nidulans (strain FGSC A4 / ATCC 38163 / CBS 112.46 / NRRL 194 / M139) (Aspergillus nidulans).